A 468-amino-acid polypeptide reads, in one-letter code: Soluble pyridine nucleotide transhydrogenase (468 aa).

36 to 45 (ERYKNVGGGC) lines the FAD pocket.

This sequence belongs to the class-I pyridine nucleotide-disulfide oxidoreductase family. It depends on FAD as a cofactor.

Its subcellular location is the cytoplasm. It carries out the reaction NAD(+) + NADPH = NADH + NADP(+). In terms of biological role, conversion of NADPH, generated by peripheral catabolic pathways, to NADH, which can enter the respiratory chain for energy generation. The protein is Soluble pyridine nucleotide transhydrogenase of Hamiltonella defensa subsp. Acyrthosiphon pisum (strain 5AT).